Here is a 295-residue protein sequence, read N- to C-terminus: Nucleotide-binding protein llmg_1557 (295 aa).

12–19 is an ATP binding site; that stretch reads GMSGAGKT. Residue 63 to 66 participates in GTP binding; the sequence is DMRS.

It belongs to the RapZ-like family.

In terms of biological role, displays ATPase and GTPase activities. The chain is Nucleotide-binding protein llmg_1557 from Lactococcus lactis subsp. cremoris (strain MG1363).